The sequence spans 1744 residues: Complement C4-A (1744 aa).

Positions 1 to 19 (MRLLWGLIWASSFFTLSLQ) are cleaved as a signal peptide. Residues cysteine 68 and cysteine 97 are joined by a disulfide bond. The N-linked (GlcNAc...) asparagine glycan is linked to asparagine 226. The cysteines at positions 635 and 669 are disulfide-linked. Residues 676–679 (RKKR) constitute a propeptide that is removed on maturation. 3 cysteine pairs are disulfide-bonded: cysteine 702–cysteine 728, cysteine 703–cysteine 735, and cysteine 716–cysteine 736. The 35-residue stretch at 702–736 (CCQDGVTRLPMMRSCEQRAARVQQPDCREPFLSCC) folds into the Anaphylatoxin-like domain. N-linked (GlcNAc...) asparagine glycosylation occurs at asparagine 862. The residue at position 918 (serine 918) is a Phosphoserine; by FAM20C. Residues 1010-1013 (CGEQ) constitute a cross-link (isoglutamyl cysteine thioester (Cys-Gln)). O-linked (GalNAc...) threonine glycosylation is present at threonine 1244. N-linked (GlcNAc...) (complex) asparagine glycosylation occurs at asparagine 1328. Asparagine 1391 carries N-linked (GlcNAc...) asparagine glycosylation. Sulfotyrosine occurs at positions 1417, 1420, and 1422. Positions 1447–1453 (RRNRRRR) are excised as a propeptide. Cystine bridges form between cysteine 1471-cysteine 1535, cysteine 1583-cysteine 1588, cysteine 1595-cysteine 1673, cysteine 1618-cysteine 1742, and cysteine 1718-cysteine 1727. The NTR domain occupies 1595-1742 (CPRQRRALER…FLQEYGTQGC (148 aa)).

In terms of assembly, complement circulates in blood as a disulfide-linked trimer of an alpha, beta and gamma chain. Complement C4b is composed of complement C4b-A, complement C4 beta and complement C4 gamma chains that are associated via disulfide bonds. Non-enzymatic component of the C3 convertase, also named C4bC2b, composed of the serine protease complement C2b (C2), as well as complement C4b. Non-enzymatic component of the C5 convertase, also named C4bC2bC3b, composed of the serine protease complement C2b (C2), complement C3b, as well as complement C4b. Post-translationally, prior to secretion, the single-chain precursor is enzymatically cleaved by plasminogen (PLG) to yield non-identical chains alpha, beta and gamma. During activation of the complement systems, the alpha chain is cleaved into C4a and C4b by different proteases depending on the complement pathway: C4b stays linked to the beta and gamma chains, while C4a is released in the plasma. The alpha chain is cleaved by C1S to generate C4a and C4b following activation by the classical complement system. The alpha chain is cleaved to generate C4a and C4b by MASP2 following activation by the lectin complement system. The alpha chain is cleaved by GZMK to generate C4a and C4b following activation by the GZMK complement system. Further degradation of C4b by C1 into the inactive fragments C4c and C4d blocks the generation of C3 convertase. The proteolytic cleavages often are incomplete so that many structural forms can be found in plasma. Upon activation, the internal thioester bond reacts with carbohydrate antigens on the target surface to form amide or ester bonds, leading to covalent association with the surface of pathogens. In terms of processing, ser-1236 of complement C4b interacts with complement C3b via a thioester linkage. Post-translationally, N- and O-glycosylated. O-glycosylated with a core 1 or possibly core 8 glycan. As to expression, complement component C4 is expressed at highest levels in the liver, at moderate levels in the adrenal cortex, adrenal medulla, thyroid gland, and the kidney, and at lowest levels in the heart, ovary, small intestine, thymus, pancreas and spleen. The extra-hepatic sites of expression may be important for the local protection and inflammatory response.

It localises to the secreted. Its subcellular location is the synapse. The protein resides in the cell projection. The protein localises to the axon. It is found in the dendrite. It localises to the cell surface. Specifically inhibited by nanobody hC4Nb8, inhibiting the classical complement pathway. Specifically inhibited by NbB5, NbE11 and NbH9 nanobodies, and to a lesser extent by NbH11 and NbE3 nanobodies. In terms of biological role, precursor of non-enzymatic components of the classical, lectin and GZMK complement pathways, which consist in a cascade of proteins that leads to phagocytosis and breakdown of pathogens and signaling that strengthens the adaptive immune system. Its function is as follows. Non-enzymatic component of C3 and C5 convertases. Generated following cleavage by complement proteases (C1S, MASP2 or GZMK, depending on the complement pathway), it covalently attaches to the surface of pathogens, where it acts as an opsonin that marks the surface of antigens for removal. It then recruits the serine protease complement C2b to form the C3 and C5 convertases, which cleave and activate C3 and C5, respectively, the next components of the complement pathways. Complement C4b-A isotype is responsible for effective binding to form amide bonds with immune aggregates or protein antigens, while complement C4b-B isotype catalyzes the transacylation of the thioester carbonyl group to form ester bonds with carbohydrate antigens. Putative humoral mediator released following cleavage by complement proteases (C1S, MASP2 or GZMK, depending on the complement pathway). While it is strongly similar to anaphylatoxins, its role is unclear. Was reported to act as a mediator of local inflammatory process; however these effects were probably due to contamination with C3a and/C5a anaphylatoxins in biological assays. This is Complement C4-A from Homo sapiens (Human).